Reading from the N-terminus, the 107-residue chain is Pyrimidine/purine nucleoside phosphorylase (107 aa).

The protein belongs to the nucleoside phosphorylase PpnP family.

It carries out the reaction a purine D-ribonucleoside + phosphate = a purine nucleobase + alpha-D-ribose 1-phosphate. The enzyme catalyses adenosine + phosphate = alpha-D-ribose 1-phosphate + adenine. The catalysed reaction is cytidine + phosphate = cytosine + alpha-D-ribose 1-phosphate. It catalyses the reaction guanosine + phosphate = alpha-D-ribose 1-phosphate + guanine. It carries out the reaction inosine + phosphate = alpha-D-ribose 1-phosphate + hypoxanthine. The enzyme catalyses thymidine + phosphate = 2-deoxy-alpha-D-ribose 1-phosphate + thymine. The catalysed reaction is uridine + phosphate = alpha-D-ribose 1-phosphate + uracil. It catalyses the reaction xanthosine + phosphate = alpha-D-ribose 1-phosphate + xanthine. Functionally, catalyzes the phosphorolysis of diverse nucleosides, yielding D-ribose 1-phosphate and the respective free bases. Can use uridine, adenosine, guanosine, cytidine, thymidine, inosine and xanthosine as substrates. Also catalyzes the reverse reactions. This is Pyrimidine/purine nucleoside phosphorylase from Aromatoleum aromaticum (strain DSM 19018 / LMG 30748 / EbN1) (Azoarcus sp. (strain EbN1)).